The primary structure comprises 556 residues: Membrane protein insertase YidC (556 aa).

5 helical membrane-spanning segments follow: residues 6–26 (IVLYMALALIGLSLWNAWQID), 332–352 (LDLTVDYGILWFLSSLLFSLM), 358–378 (VVGNWGWSIVLVTVLIKLAFY), 428–448 (LGGCLPILIQIPVFIALYWVL), and 501–521 (VMMFLPILFTGLFWNFPSGLV).

The protein belongs to the OXA1/ALB3/YidC family. Type 1 subfamily. Interacts with the Sec translocase complex via SecD. Specifically interacts with transmembrane segments of nascent integral membrane proteins during membrane integration.

The protein resides in the cell inner membrane. In terms of biological role, required for the insertion and/or proper folding and/or complex formation of integral membrane proteins into the membrane. Involved in integration of membrane proteins that insert both dependently and independently of the Sec translocase complex, as well as at least some lipoproteins. Aids folding of multispanning membrane proteins. The protein is Membrane protein insertase YidC of Legionella pneumophila (strain Paris).